Consider the following 143-residue polypeptide: Transcription antitermination protein NusB (143 aa).

The protein belongs to the NusB family.

Involved in transcription antitermination. Required for transcription of ribosomal RNA (rRNA) genes. Binds specifically to the boxA antiterminator sequence of the ribosomal RNA (rrn) operons. The protein is Transcription antitermination protein NusB of Streptomyces griseus subsp. griseus (strain JCM 4626 / CBS 651.72 / NBRC 13350 / KCC S-0626 / ISP 5235).